Consider the following 478-residue polypeptide: Dihydrolipoyl dehydrogenase (478 aa).

Residues 34–49 (EKYI…GGTC), K58, and G122 each bind FAD. C49 and C54 are joined by a disulfide. NAD(+) is bound by residues 188–192 (GAGVI), E211, V245, and 276–279 (AVGR). D319 and A327 together coordinate FAD. Residue H451 is the Proton acceptor of the active site.

This sequence belongs to the class-I pyridine nucleotide-disulfide oxidoreductase family. In terms of assembly, homodimer. Requires FAD as cofactor.

The protein localises to the cytoplasm. It carries out the reaction N(6)-[(R)-dihydrolipoyl]-L-lysyl-[protein] + NAD(+) = N(6)-[(R)-lipoyl]-L-lysyl-[protein] + NADH + H(+). In terms of biological role, the branched-chain alpha-keto dehydrogenase complex catalyzes the overall conversion of alpha-keto acids to acyl-CoA and CO(2). It contains multiple copies of 3 enzymatic components: branched-chain alpha-keto acid decarboxylase (E1), lipoamide acyltransferase (E2) and lipoamide dehydrogenase (E3). This is Dihydrolipoyl dehydrogenase (lpd) from Pseudomonas fluorescens.